Reading from the N-terminus, the 264-residue chain is ATP synthase subunit a (264 aa).

Helical transmembrane passes span 29–49 (TWHI…LWLF), 89–109 (VIAP…FMDM), 134–154 (DLNI…YYSI), 177–197 (IPVN…SLAL), 208–228 (LIFI…ALGV), and 235–255 (LIFH…LTIV).

The protein belongs to the ATPase A chain family. In terms of assembly, F-type ATPases have 2 components, CF(1) - the catalytic core - and CF(0) - the membrane proton channel. CF(1) has five subunits: alpha(3), beta(3), gamma(1), delta(1), epsilon(1). CF(0) has three main subunits: a(1), b(2) and c(9-12). The alpha and beta chains form an alternating ring which encloses part of the gamma chain. CF(1) is attached to CF(0) by a central stalk formed by the gamma and epsilon chains, while a peripheral stalk is formed by the delta and b chains.

The protein resides in the cell inner membrane. Its function is as follows. Key component of the proton channel; it plays a direct role in the translocation of protons across the membrane. This chain is ATP synthase subunit a, found in Shewanella sediminis (strain HAW-EB3).